We begin with the raw amino-acid sequence, 322 residues long: Phosphatidylserine decarboxylase proenzyme (322 aa).

Catalysis depends on charge relay system; for autoendoproteolytic cleavage activity residues aspartate 90, histidine 147, and serine 254. Serine 254 (schiff-base intermediate with substrate; via pyruvic acid; for decarboxylase activity) is an active-site residue. At serine 254 the chain carries Pyruvic acid (Ser); by autocatalysis. The tract at residues 294-322 (EAEPAPLPEEEINAEHDASPLVDDKKDES) is disordered. A compositionally biased stretch (basic and acidic residues) spans 306-322 (NAEHDASPLVDDKKDES).

Belongs to the phosphatidylserine decarboxylase family. PSD-B subfamily. Prokaryotic type I sub-subfamily. Heterodimer of a large membrane-associated beta subunit and a small pyruvoyl-containing alpha subunit. Pyruvate is required as a cofactor. Post-translationally, is synthesized initially as an inactive proenzyme. Formation of the active enzyme involves a self-maturation process in which the active site pyruvoyl group is generated from an internal serine residue via an autocatalytic post-translational modification. Two non-identical subunits are generated from the proenzyme in this reaction, and the pyruvate is formed at the N-terminus of the alpha chain, which is derived from the carboxyl end of the proenzyme. The autoendoproteolytic cleavage occurs by a canonical serine protease mechanism, in which the side chain hydroxyl group of the serine supplies its oxygen atom to form the C-terminus of the beta chain, while the remainder of the serine residue undergoes an oxidative deamination to produce ammonia and the pyruvoyl prosthetic group on the alpha chain. During this reaction, the Ser that is part of the protease active site of the proenzyme becomes the pyruvoyl prosthetic group, which constitutes an essential element of the active site of the mature decarboxylase.

Its subcellular location is the cell membrane. It catalyses the reaction a 1,2-diacyl-sn-glycero-3-phospho-L-serine + H(+) = a 1,2-diacyl-sn-glycero-3-phosphoethanolamine + CO2. Its pathway is phospholipid metabolism; phosphatidylethanolamine biosynthesis; phosphatidylethanolamine from CDP-diacylglycerol: step 2/2. Catalyzes the formation of phosphatidylethanolamine (PtdEtn) from phosphatidylserine (PtdSer). In Citrobacter koseri (strain ATCC BAA-895 / CDC 4225-83 / SGSC4696), this protein is Phosphatidylserine decarboxylase proenzyme.